The primary structure comprises 164 residues: Putative 4-hydroxy-4-methyl-2-oxoglutarate aldolase (164 aa).

Residues 75–78 (GDML) and R97 contribute to the substrate site. D98 is an a divalent metal cation binding site.

The protein belongs to the class II aldolase/RraA-like family. In terms of assembly, homotrimer. Requires a divalent metal cation as cofactor.

The enzyme catalyses 4-hydroxy-4-methyl-2-oxoglutarate = 2 pyruvate. It catalyses the reaction oxaloacetate + H(+) = pyruvate + CO2. Functionally, catalyzes the aldol cleavage of 4-hydroxy-4-methyl-2-oxoglutarate (HMG) into 2 molecules of pyruvate. Also contains a secondary oxaloacetate (OAA) decarboxylase activity due to the common pyruvate enolate transition state formed following C-C bond cleavage in the retro-aldol and decarboxylation reactions. This chain is Putative 4-hydroxy-4-methyl-2-oxoglutarate aldolase, found in Hahella chejuensis (strain KCTC 2396).